A 149-amino-acid chain; its full sequence is MGKEKSVRIGRQALLLAMLDEGEEGAILDELRASNWRYCQGRVGAMEPQKIVAAIETAAKRHEVVDGSLYRDMHALYHAILEAVHGVTRGQVELGDLLRTAGLRFAVVRGTPYEQPKEGEWIAVALYGTIGAPVRGLEHEAVGLGINHI.

It belongs to the HutP family. In terms of assembly, homohexamer.

Functionally, antiterminator that binds to cis-acting regulatory sequences on the mRNA in the presence of histidine, thereby suppressing transcription termination and activating the hut operon for histidine utilization. In Geobacillus thermodenitrificans (strain NG80-2), this protein is Hut operon positive regulatory protein.